The sequence spans 441 residues: Mitochondrial distribution and morphology protein 12 (441 aa).

In terms of domain architecture, SMP-LTD spans 1–441 (MSIDIDWERA…VYPSFWTFLV (441 aa)). The segment at 180–289 (TPLRAVTRGN…SGTPPRRMRE (110 aa)) is disordered. Composition is skewed to polar residues over residues 226 to 245 (SRPS…SVST) and 253 to 263 (SSQTVLANNPG).

The protein belongs to the MDM12 family. Component of the ER-mitochondria encounter structure (ERMES) or MDM complex, composed of MMM1, MDM10, MDM12 and MDM34. An MMM1 homodimer associates with one molecule of MDM12 on each side in a pairwise head-to-tail manner, and the SMP-LTD domains of MMM1 and MDM12 generate a continuous hydrophobic tunnel for phospholipid trafficking.

The protein localises to the mitochondrion outer membrane. It is found in the endoplasmic reticulum membrane. In terms of biological role, component of the ERMES/MDM complex, which serves as a molecular tether to connect the endoplasmic reticulum (ER) and mitochondria. Components of this complex are involved in the control of mitochondrial shape and protein biogenesis, and function in nonvesicular lipid trafficking between the ER and mitochondria. MDM12 is required for the interaction of the ER-resident membrane protein MMM1 and the outer mitochondrial membrane-resident beta-barrel protein MDM10. The MDM12-MMM1 subcomplex functions in the major beta-barrel assembly pathway that is responsible for biogenesis of all mitochondrial outer membrane beta-barrel proteins, and acts in a late step after the SAM complex. The MDM10-MDM12-MMM1 subcomplex further acts in the TOM40-specific pathway after the action of the MDM12-MMM1 complex. Essential for establishing and maintaining the structure of mitochondria and maintenance of mtDNA nucleoids. This Paracoccidioides brasiliensis (strain Pb18) protein is Mitochondrial distribution and morphology protein 12.